The following is a 276-amino-acid chain: Large ribosomal subunit protein uL2 (276 aa).

Disordered stretches follow at residues 29–55 (PEKS…RHRG) and 219–276 (HVRG…RRTR). Positions 259 to 276 (TRNKKKQSSKLIVRRRTR) are enriched in basic residues.

The protein belongs to the universal ribosomal protein uL2 family. Part of the 50S ribosomal subunit. Forms a bridge to the 30S subunit in the 70S ribosome.

In terms of biological role, one of the primary rRNA binding proteins. Required for association of the 30S and 50S subunits to form the 70S ribosome, for tRNA binding and peptide bond formation. It has been suggested to have peptidyltransferase activity; this is somewhat controversial. Makes several contacts with the 16S rRNA in the 70S ribosome. The polypeptide is Large ribosomal subunit protein uL2 (Rippkaea orientalis (strain PCC 8801 / RF-1) (Cyanothece sp. (strain PCC 8801))).